A 154-amino-acid chain; its full sequence is Large ribosomal subunit protein uL13 (154 aa).

The segment at 132-154 is disordered; it reads PHEAQQPEVLDVKSMNAKNTRSA.

This sequence belongs to the universal ribosomal protein uL13 family. In terms of assembly, part of the 50S ribosomal subunit.

This protein is one of the early assembly proteins of the 50S ribosomal subunit, although it is not seen to bind rRNA by itself. It is important during the early stages of 50S assembly. This chain is Large ribosomal subunit protein uL13, found in Paracoccus denitrificans (strain Pd 1222).